Reading from the N-terminus, the 260-residue chain is Dynein regulatory complex subunit 6 (260 aa).

Over residues 1–13 the composition is skewed to basic residues; the sequence is MAPKKKGGGKKKK. Residues 1-43 form a disordered region; the sequence is MAPKKKGGGKKKKKDDGAEPPHDGSWERAVESGTWEKPVTDLP. Residues 14–30 show a composition bias toward basic and acidic residues; the sequence is KDDGAEPPHDGSWERAV.

Belongs to the DRC6 family. Component of the nexin-dynein regulatory complex (N-DRC).

It is found in the cytoplasm. The protein localises to the cytoskeleton. It localises to the flagellum axoneme. In terms of biological role, component of the nexin-dynein regulatory complex (N-DRC), a key regulator of ciliary/flagellar motility which maintains the alignment and integrity of the distal axoneme and regulates microtubule sliding in motile axonemes. The chain is Dynein regulatory complex subunit 6 from Chlamydomonas reinhardtii (Chlamydomonas smithii).